A 346-amino-acid chain; its full sequence is S-adenosylmethionine:tRNA ribosyltransferase-isomerase (346 aa).

The protein belongs to the QueA family. As to quaternary structure, monomer.

The protein localises to the cytoplasm. It catalyses the reaction 7-aminomethyl-7-carbaguanosine(34) in tRNA + S-adenosyl-L-methionine = epoxyqueuosine(34) in tRNA + adenine + L-methionine + 2 H(+). It participates in tRNA modification; tRNA-queuosine biosynthesis. In terms of biological role, transfers and isomerizes the ribose moiety from AdoMet to the 7-aminomethyl group of 7-deazaguanine (preQ1-tRNA) to give epoxyqueuosine (oQ-tRNA). The chain is S-adenosylmethionine:tRNA ribosyltransferase-isomerase from Borreliella afzelii (strain PKo) (Borrelia afzelii).